Here is a 512-residue protein sequence, read N- to C-terminus: Acid-sensing ion channel 2 (512 aa).

The Cytoplasmic portion of the chain corresponds to Met1–Arg42. Phosphoserine is present on residues Ser8 and Ser11. The chain crosses the membrane as a helical span at residues Val43–Val64. Residues Ser65–Glu424 are Extracellular-facing. Intrachain disulfides connect Cys92-Cys193, Cys289-Cys364, Cys307-Cys360, Cys311-Cys358, Cys320-Cys342, and Cys322-Cys334. Residues Asn365 and Asn392 are each glycosylated (N-linked (GlcNAc...) asparagine). Residues Val425–Phe439 traverse the membrane as a helical segment. At Ile440–Cys512 the chain is on the cytoplasmic side. The GAS motif; ion selectivity filter motif lies at Gly441–Ser443.

The protein belongs to the amiloride-sensitive sodium channel (TC 1.A.6) family. ASIC2 subfamily. In terms of assembly, can form homotrimers. Heterotrimer; forms functional heterotrimers producing channel with different properties. Forms heterotrimers with ASIC1; while ASIC1 determines current amplitude, ASIC2 influences the properties of the current. Forms heterotrimers with ASIC3; resulting in channels with distinct properties. Interacts with STOM; STOM regulates the gating of ASIC2-containing channels. Interacts with PICK1; promotes ASIC3 phosphorylation by PKC and activation of ASIC2/ASIC3 heterotrimers. In terms of tissue distribution, expressed in brain, cerebellum, trigeminal sensory ganglia and also detected in testis.

The protein resides in the cell membrane. The catalysed reaction is Na(+)(in) = Na(+)(out). It carries out the reaction K(+)(in) = K(+)(out). It catalyses the reaction Li(+)(in) = Li(+)(out). With respect to regulation, inhibited by the diuretic drug amiloride. Inhibited by gadolinium ions, the heterotrimer with ASIC3 being more sensitive. Heterotrimer composed of ASIC1 and ASIC2 are inhibited by the snake venom mambalgin-1. In terms of biological role, forms pH-gated trimeric sodium channels that act as postsynaptic excitatory sensors in the nervous system. Upon extracellular acidification, these channels generate rapid, transient inward currents that fully desensitize. Highly selective for sodium, they are permeable to other cations. By forming heterotrimeric channels with ASIC1, could contribute to synaptic plasticity, learning, and memory. Additionally, as acid sensors at nerve terminals, plays a role in mechanosensation and phototransduction. This is Acid-sensing ion channel 2 from Homo sapiens (Human).